We begin with the raw amino-acid sequence, 551 residues long: CTP synthase (551 aa).

Residues 1–267 (MSGTKYIFVT…DALVLEKLGL (267 aa)) are amidoligase domain. Ser15 is a binding site for CTP. UTP is bound at residue Ser15. Residue 16-21 (SIGKGT) coordinates ATP. Tyr56 is an L-glutamine binding site. Asp73 contributes to the ATP binding site. Positions 73 and 141 each coordinate Mg(2+). CTP contacts are provided by residues 148–150 (DIE), 188–193 (KTKPTQ), and Lys224. UTP is bound by residues 188–193 (KTKPTQ) and Lys224. The Glutamine amidotransferase type-1 domain occupies 292–534 (RVAVIGKYIR…VGACLGAAEE (243 aa)). Gly355 serves as a coordination point for L-glutamine. Cys382 serves as the catalytic Nucleophile; for glutamine hydrolysis. Residues 383–386 (LGMQ), Glu406, and Arg462 contribute to the L-glutamine site. Residues His507 and Glu509 contribute to the active site.

It belongs to the CTP synthase family. In terms of assembly, homotetramer.

The catalysed reaction is UTP + L-glutamine + ATP + H2O = CTP + L-glutamate + ADP + phosphate + 2 H(+). The enzyme catalyses L-glutamine + H2O = L-glutamate + NH4(+). It catalyses the reaction UTP + NH4(+) + ATP = CTP + ADP + phosphate + 2 H(+). Its pathway is pyrimidine metabolism; CTP biosynthesis via de novo pathway; CTP from UDP: step 2/2. Allosterically activated by GTP, when glutamine is the substrate; GTP has no effect on the reaction when ammonia is the substrate. The allosteric effector GTP functions by stabilizing the protein conformation that binds the tetrahedral intermediate(s) formed during glutamine hydrolysis. Inhibited by the product CTP, via allosteric rather than competitive inhibition. Functionally, catalyzes the ATP-dependent amination of UTP to CTP with either L-glutamine or ammonia as the source of nitrogen. Regulates intracellular CTP levels through interactions with the four ribonucleotide triphosphates. This Rubrobacter xylanophilus (strain DSM 9941 / JCM 11954 / NBRC 16129 / PRD-1) protein is CTP synthase.